Reading from the N-terminus, the 319-residue chain is MESSASCLPGFFMSFLLLQNTVLTQAMRSDIKINIQVPDTEGLLLECTSGSLIPPAEMTWRDSNGNIIPHSTAFNSQDRDGLLYLKSSILLKNRAKGPITCSIYNVTTNQEKKRSIVLPDALFKSENMSLMSNKFSCPSIYLITIIFLNFLRGILVFCCLRRKPVCFRNLMSTVMEALYSKMGVCCLLIWECLLLVLYIAFLPIYVSFRSRAFLLDDTYPLYTNWLWNICIILTVIMVLFPGLILCLLWTLNCYGQVSSLPPTSMELSTKDSEQNSSKSDDSQENYDVNCKILETCESKIFSQHQESCEDDTASTLFIS.

An N-terminal signal peptide occupies residues 1–26 (MESSASCLPGFFMSFLLLQNTVLTQA). One can recognise an Ig-like V-type domain in the interval 27–117 (MRSDIKINIQ…TNQEKKRSIV (91 aa)). At 27 to 139 (MRSDIKINIQ…LMSNKFSCPS (113 aa)) the chain is on the extracellular side. Cys-47 and Cys-101 form a disulfide bridge. N-linked (GlcNAc...) asparagine glycosylation occurs at Asn-105. A helical transmembrane segment spans residues 140-160 (IYLITIIFLNFLRGILVFCCL). At 161-183 (RRKPVCFRNLMSTVMEALYSKMG) the chain is on the cytoplasmic side. The helical transmembrane segment at 184–204 (VCCLLIWECLLLVLYIAFLPI) threads the bilayer. Topologically, residues 205 to 228 (YVSFRSRAFLLDDTYPLYTNWLWN) are extracellular. Residues 229–249 (ICIILTVIMVLFPGLILCLLW) form a helical membrane-spanning segment. Topologically, residues 250 to 319 (TLNCYGQVSS…DDTASTLFIS (70 aa)) are cytoplasmic.

The protein belongs to the SKINT family. Expressed in skin, thymus and testis.

It is found in the membrane. In terms of biological role, may act by engaging a cell surface molecule on immature T-cells in the embryonic thymus. The sequence is that of Selection and upkeep of intraepithelial T-cells protein 9 (Skint9) from Mus musculus (Mouse).